The primary structure comprises 527 residues: Glutamyl-tRNA reductase 1, chloroplastic (527 aa).

The transit peptide at 1–43 (MAGATSATAAAGAFAAAKARGPAAACPWLVAAGGRRRSGVVRC) directs the protein to the chloroplast. Substrate contacts are provided by residues 124–127 (TCNR), S184, 189–191 (EGQ), and Q195. C125 serves as the catalytic Nucleophile. 266-271 (GAGKMG) lines the NADP(+) pocket.

It belongs to the glutamyl-tRNA reductase family. As to quaternary structure, homodimer.

The protein resides in the plastid. Its subcellular location is the chloroplast. It catalyses the reaction (S)-4-amino-5-oxopentanoate + tRNA(Glu) + NADP(+) = L-glutamyl-tRNA(Glu) + NADPH + H(+). It participates in porphyrin-containing compound metabolism; protoporphyrin-IX biosynthesis; 5-aminolevulinate from L-glutamyl-tRNA(Glu): step 1/2. In terms of biological role, catalyzes the NADPH-dependent reduction of glutamyl-tRNA(Glu) to glutamate 1-semialdehyde (GSA). The protein is Glutamyl-tRNA reductase 1, chloroplastic (HEMA1) of Hordeum vulgare (Barley).